The chain runs to 276 residues: BES1/BZR1 homolog protein 1 (276 aa).

Disordered regions lie at residues 1–30 (MTAS…RERR), 76–125 (TTYR…PTRF), and 155–191 (SAPV…PTRR). Residues 14–87 (RMPTWKEREN…YRKGSRPTET (74 aa)) form a required for DNA-binding region. Polar residues predominate over residues 84–103 (PTETTVPCSSIQLSPQSSAF). Residues 104–122 (QSPIPSYQASPSSSSYPSP) show a composition bias toward low complexity. The residue at position 159 (Thr-159) is a Phosphothreonine. A compositionally biased stretch (low complexity) spans 164-174 (SPRRSNPRLPR). The span at 175 to 189 (WQSSNFPVSAPSSPT) shows a compositional bias: polar residues.

This sequence belongs to the BZR/LAT61 family. Phosphorylated. Phosphorylation increases protein degradation.

The sequence is that of BES1/BZR1 homolog protein 1 (BEH1) from Arabidopsis thaliana (Mouse-ear cress).